The primary structure comprises 583 residues: 2-succinyl-5-enolpyruvyl-6-hydroxy-3-cyclohexene-1-carboxylate synthase (583 aa).

Belongs to the TPP enzyme family. MenD subfamily. In terms of assembly, homodimer. The cofactor is Mg(2+). Mn(2+) is required as a cofactor. Thiamine diphosphate serves as cofactor.

The catalysed reaction is isochorismate + 2-oxoglutarate + H(+) = 5-enolpyruvoyl-6-hydroxy-2-succinyl-cyclohex-3-ene-1-carboxylate + CO2. It functions in the pathway quinol/quinone metabolism; 1,4-dihydroxy-2-naphthoate biosynthesis; 1,4-dihydroxy-2-naphthoate from chorismate: step 2/7. Its pathway is quinol/quinone metabolism; menaquinone biosynthesis. Functionally, catalyzes the thiamine diphosphate-dependent decarboxylation of 2-oxoglutarate and the subsequent addition of the resulting succinic semialdehyde-thiamine pyrophosphate anion to isochorismate to yield 2-succinyl-5-enolpyruvyl-6-hydroxy-3-cyclohexene-1-carboxylate (SEPHCHC). The polypeptide is 2-succinyl-5-enolpyruvyl-6-hydroxy-3-cyclohexene-1-carboxylate synthase (Chlorobium chlorochromatii (strain CaD3)).